Here is a 426-residue protein sequence, read N- to C-terminus: Trigger factor (426 aa).

A PPIase FKBP-type domain is found at glycine 166–proline 249.

The protein belongs to the FKBP-type PPIase family. Tig subfamily.

It localises to the cytoplasm. It catalyses the reaction [protein]-peptidylproline (omega=180) = [protein]-peptidylproline (omega=0). Its function is as follows. Involved in protein export. Acts as a chaperone by maintaining the newly synthesized protein in an open conformation. Functions as a peptidyl-prolyl cis-trans isomerase. This chain is Trigger factor, found in Mesoplasma florum (strain ATCC 33453 / NBRC 100688 / NCTC 11704 / L1) (Acholeplasma florum).